Consider the following 284-residue polypeptide: 4-hydroxybenzoate octaprenyltransferase (284 aa).

Transmembrane regions (helical) follow at residues 18-38 (PIGT…AAEG), 42-62 (WHVL…GCVI), 93-113 (IILF…MNPL), 136-156 (HLPQ…AWAA), 161-181 (LPWV…AYDT), 209-229 (LIIG…GLHY), 233-253 (QSFY…QHLI), and 264-284 (AFLN…VAFW).

It belongs to the UbiA prenyltransferase family. Mg(2+) serves as cofactor.

The protein resides in the cell inner membrane. It catalyses the reaction all-trans-octaprenyl diphosphate + 4-hydroxybenzoate = 4-hydroxy-3-(all-trans-octaprenyl)benzoate + diphosphate. It functions in the pathway cofactor biosynthesis; ubiquinone biosynthesis. Functionally, catalyzes the prenylation of para-hydroxybenzoate (PHB) with an all-trans polyprenyl group. Mediates the second step in the final reaction sequence of ubiquinone-8 (UQ-8) biosynthesis, which is the condensation of the polyisoprenoid side chain with PHB, generating the first membrane-bound Q intermediate 3-octaprenyl-4-hydroxybenzoate. The protein is 4-hydroxybenzoate octaprenyltransferase of Vibrio vulnificus (strain CMCP6).